The sequence spans 286 residues: Acetyl-coenzyme A carboxylase carboxyl transferase subunit beta (286 aa).

One can recognise a CoA carboxyltransferase N-terminal domain in the interval 27-286 (LMTKCPKCKL…HSEETNHATI (260 aa)). Zn(2+) contacts are provided by Cys-31, Cys-34, Cys-50, and Cys-52. A C4-type zinc finger spans residues 31-52 (CPKCKLIQYTKQLEANLKVCVC).

The protein belongs to the AccD/PCCB family. As to quaternary structure, acetyl-CoA carboxylase is a heterohexamer composed of biotin carboxyl carrier protein (AccB), biotin carboxylase (AccC) and two subunits each of ACCase subunit alpha (AccA) and ACCase subunit beta (AccD). Zn(2+) serves as cofactor.

The protein localises to the cytoplasm. The catalysed reaction is N(6)-carboxybiotinyl-L-lysyl-[protein] + acetyl-CoA = N(6)-biotinyl-L-lysyl-[protein] + malonyl-CoA. It functions in the pathway lipid metabolism; malonyl-CoA biosynthesis; malonyl-CoA from acetyl-CoA: step 1/1. Functionally, component of the acetyl coenzyme A carboxylase (ACC) complex. Biotin carboxylase (BC) catalyzes the carboxylation of biotin on its carrier protein (BCCP) and then the CO(2) group is transferred by the transcarboxylase to acetyl-CoA to form malonyl-CoA. The polypeptide is Acetyl-coenzyme A carboxylase carboxyl transferase subunit beta (Exiguobacterium sibiricum (strain DSM 17290 / CCUG 55495 / CIP 109462 / JCM 13490 / 255-15)).